The chain runs to 317 residues: Lipoyl synthase (317 aa).

Positions 1-21 are disordered; the sequence is MVTVIDTLARPRHPEKANRPE. The segment covering 12-21 has biased composition (basic and acidic residues); the sequence is RHPEKANRPE. Residues Cys57, Cys62, Cys68, Cys83, Cys87, Cys90, and Ser296 each contribute to the [4Fe-4S] cluster site. The region spanning 69 to 285 is the Radical SAM core domain; it reads WEKKHATFMI…ETVAYAKGFL (217 aa).

It belongs to the radical SAM superfamily. Lipoyl synthase family. [4Fe-4S] cluster serves as cofactor.

The protein localises to the cytoplasm. It carries out the reaction [[Fe-S] cluster scaffold protein carrying a second [4Fe-4S](2+) cluster] + N(6)-octanoyl-L-lysyl-[protein] + 2 oxidized [2Fe-2S]-[ferredoxin] + 2 S-adenosyl-L-methionine + 4 H(+) = [[Fe-S] cluster scaffold protein] + N(6)-[(R)-dihydrolipoyl]-L-lysyl-[protein] + 4 Fe(3+) + 2 hydrogen sulfide + 2 5'-deoxyadenosine + 2 L-methionine + 2 reduced [2Fe-2S]-[ferredoxin]. It participates in protein modification; protein lipoylation via endogenous pathway; protein N(6)-(lipoyl)lysine from octanoyl-[acyl-carrier-protein]: step 2/2. Catalyzes the radical-mediated insertion of two sulfur atoms into the C-6 and C-8 positions of the octanoyl moiety bound to the lipoyl domains of lipoate-dependent enzymes, thereby converting the octanoylated domains into lipoylated derivatives. This chain is Lipoyl synthase, found in Xanthobacter autotrophicus (strain ATCC BAA-1158 / Py2).